The following is a 144-amino-acid chain: MRLNTLSPAEGAKHSAKRLGRGIGSGLGKTGGRGHKGQKSRTGGKVRRGFEGGQMPLYRRLPKFGFTSKIAAVTAEIRLNDLTKVDGNIVTLEALKAANVITKDIQFAKVILAGEINNAVTIRGLRVTQGAKAAIEAAGGSVEE.

Residues 1–51 (MRLNTLSPAEGAKHSAKRLGRGIGSGLGKTGGRGHKGQKSRTGGKVRRGFE) are disordered. Residues 21–31 (RGIGSGLGKTG) show a composition bias toward gly residues. Positions 32–47 (GRGHKGQKSRTGGKVR) are enriched in basic residues.

This sequence belongs to the universal ribosomal protein uL15 family. In terms of assembly, part of the 50S ribosomal subunit.

Binds to the 23S rRNA. In Actinobacillus succinogenes (strain ATCC 55618 / DSM 22257 / CCUG 43843 / 130Z), this protein is Large ribosomal subunit protein uL15.